Consider the following 503-residue polypeptide: MALAPERAAPRVLFGEWLLGEISSGCYEGLQWLDEARTCFRVPWKHFARKDLSEADARIFKAWAVARGRWPPSSRGGGPPPEAETAERAGWKTNFRCALRSTRRFVMLRDNSGDPADPHKVYALSRELCWREGPGTDQTEAEAPAAVPPPQGGPPGPFLAHTHAGLQAPGPLPAPAGDKGDLLLQAVQQSCLADHLLTASWGADPVPTKAPGEGQEGLPLTGACAGGPGLPAGELYGWAVETTPSPGPQPAALTTGEAAAPESPHQAEPYLSPSPSACTAVQEPSPGALDVTIMYKGRTVLQKVVGHPSCTFLYGPPDPAVRATDPQQVAFPSPAELPDQKQLRYTEELLRHVAPGLHLELRGPQLWARRMGKCKVYWEVGGPPGSASPSTPACLLPRNCDTPIFDFRVFFQELVEFRARQRRGSPRYTIYLGFGQDLSAGRPKEKSLVLVKLEPWLCRVHLEGTQREGVSSLDSSSLSLCLSSANSLYDDIECFLMELEQPA.

Positions 11 to 126 (RVLFGEWLLG…DPHKVYALSR (116 aa)) form a DNA-binding region, IRF tryptophan pentad repeat. The disordered stretch occupies residues 69 to 88 (RWPPSSRGGGPPPEAETAER). Position 92 is an N6-acetyllysine; by KAT2A and KAT2B (lysine 92). Disordered regions lie at residues 133–156 (GPGT…GPPG) and 242–277 (TTPS…SPSA). Pro residues predominate over residues 146-156 (AVPPPQGGPPG). The interval 284–456 (PSPGALDVTI…SLVLVKLEPW (173 aa)) is necessary for the interaction with NMI. A Glycyl lysine isopeptide (Lys-Gly) (interchain with G-Cter in ubiquitin) cross-link involves residue lysine 375. Glycyl lysine isopeptide (Lys-Gly) (interchain with G-Cter in SUMO) cross-links involve residues lysine 444 and lysine 446. 3 positions are modified to phosphoserine: serine 471, serine 472, and serine 475. A phosphoserine; by TBK1 and IKKE mark is found at serine 477 and serine 479. Phosphoserine occurs at positions 483, 484, and 487.

This sequence belongs to the IRF family. As to quaternary structure, monomer. Homodimer; phosphorylation-induced. Heterodimer with IRF3. Interacts with TICAM1 and TICAM2. Interacts with MYD88 and TRAF6. Interacts with TRIM35. Interacts with NMI; the interaction is direct and leads to the inhibition of IRF7-mediated type I IFN production. Interacts with GBP4; preventing interaction between TRAF6 and IRF7, resulting in impaired TRAF6-mediated IRF7 ubiquitination. In terms of assembly, (Microbial infection) Interacts with Epstein-Barr virus LF2 and LMP1. (Microbial infection) Interacts with rotavirus A NSP1; this interaction leads to the proteasome-dependent degradation of IRF7. As to quaternary structure, (Microbial infection) Interacts with human herpes virus 8/HHV-8 proteins ORF45 and vIRF-1. In terms of assembly, (Microbial infection) Interacts with human T-cell leukemia virus 1/HTLV-1 protein HBZ. (Microbial infection) Interacts with Seneca Valley virus protease 3C; this interaction is involved in the suppression of IRF7 expression and phosphorylation by the virus. As to quaternary structure, (Microbial infection) Interacts with ebolavirus VP35; this interaction mediates the sumoylation of IRF7 and contributes to the viral inhibition of IFN-type I production. In terms of assembly, (Microbial infection) Interacts with severe fever with thrombocytopenia syndrome virus (SFTSV) NSs; this interaction sequesters IRF7 in NSs-induced cytoplasmic inclusion bodies. (Microbial infection) Interacts with herpes virus 8/HHV-8 protein vIRF-4; this interaction prevents IRF7 dimerization and subsequent activation. As to quaternary structure, (Microbial infection) Interacts with human metapneumovirus protein M2-2; this interaction prevents IRF7 phosphorlyation and subsequent TLR7/9-dependent IFN-alpha induction. In terms of processing, acetylation inhibits its DNA-binding ability and activity. In response to a viral infection, phosphorylated on Ser-477 and Ser-479 by TBK1 and IKBKE1. Phosphorylation, and subsequent activation is inhibited by vaccinia virus protein E3. In TLR7- and TLR9-mediated signaling pathway, phosphorylated by IRAK1. Post-translationally, TRAF6-mediated ubiquitination is required for IRF7 activation. TRIM35 mediates IRF7 'Lys-48'-linked polyubiquitination and subsequent proteasomal degradation. Ubiquitinated by UBE3C, leading to its degradation. In terms of processing, sumoylated by TRIM28, which inhibits its transactivation activity. (Microbial infection) Cleaved and inactivated by the protease 3C of enterovirus 71 allowing the virus to disrupt the host type I interferon production. Post-translationally, (Microbial infection) Cleaved and inactivated by the protease 3C of human enterovirus 68D (EV68) allowing the virus to disrupt the host type I interferon production. In terms of processing, 'Lys-48'-linked polyubiquitination and subsequent proteasomal degradation is NMI-dependent in response to Sendai virus infection. 'Lys-63'-linked ubiquitination by NEURL3 promotes IRF7 activation. As to expression, expressed predominantly in spleen, thymus and peripheral blood leukocytes.

The protein resides in the nucleus. It localises to the cytoplasm. In the absence of viral infection, maintained as a monomer in an autoinhibited state and phosphorylation disrupts this autoinhibition leading to the liberation of the DNA-binding and dimerization activities and its nuclear localization where it can activate type I IFN and ISG genes. Functionally, key transcriptional regulator of type I interferon (IFN)-dependent immune responses and plays a critical role in the innate immune response against DNA and RNA viruses. Regulates the transcription of type I IFN genes (IFN-alpha and IFN-beta) and IFN-stimulated genes (ISG) by binding to an interferon-stimulated response element (ISRE) in their promoters. Can efficiently activate both the IFN-beta (IFNB) and the IFN-alpha (IFNA) genes and mediate their induction via both the virus-activated, MyD88-independent pathway and the TLR-activated, MyD88-dependent pathway. Induces transcription of ubiquitin hydrolase USP25 mRNA in response to lipopolysaccharide (LPS) or viral infection in a type I IFN-dependent manner. Required during both the early and late phases of the IFN gene induction but is more critical for the late than for the early phase. Exists in an inactive form in the cytoplasm of uninfected cells and following viral infection, double-stranded RNA (dsRNA), or toll-like receptor (TLR) signaling, becomes phosphorylated by IKBKE and TBK1 kinases. This induces a conformational change, leading to its dimerization and nuclear localization where along with other coactivators it can activate transcription of the type I IFN and ISG genes. Can also play a role in regulating adaptive immune responses by inducing PSMB9/LMP2 expression, either directly or through induction of IRF1. Binds to the Q promoter (Qp) of EBV nuclear antigen 1 a (EBNA1) and may play a role in the regulation of EBV latency. Can activate distinct gene expression programs in macrophages and regulate the anti-tumor properties of primary macrophages. This Homo sapiens (Human) protein is Interferon regulatory factor 7 (IRF7).